Here is a 210-residue protein sequence, read N- to C-terminus: GEM-like protein 7 (210 aa).

Residues 88 to 166 (KIYKRLFKVC…CKINGVNQSQ (79 aa)) form the GRAM domain.

Belongs to the GEM family.

This chain is GEM-like protein 7, found in Arabidopsis thaliana (Mouse-ear cress).